The primary structure comprises 351 residues: Glycerol-1-phosphate dehydrogenase [NAD(P)+] (351 aa).

Residues 97–101 and 119–122 contribute to the NAD(+) site; these read GTVID and TSPS. D124 contributes to the substrate binding site. An NAD(+)-binding site is contributed by S128. D171 provides a ligand contact to substrate. Positions 171 and 251 each coordinate Zn(2+). H255 provides a ligand contact to substrate. H267 contacts Zn(2+).

This sequence belongs to the glycerol-1-phosphate dehydrogenase family. As to quaternary structure, homodimer. It depends on Zn(2+) as a cofactor.

The protein resides in the cytoplasm. It carries out the reaction sn-glycerol 1-phosphate + NAD(+) = dihydroxyacetone phosphate + NADH + H(+). The enzyme catalyses sn-glycerol 1-phosphate + NADP(+) = dihydroxyacetone phosphate + NADPH + H(+). The protein operates within membrane lipid metabolism; glycerophospholipid metabolism. Functionally, catalyzes the NAD(P)H-dependent reduction of dihydroxyacetonephosphate (DHAP or glycerone phosphate) to glycerol 1-phosphate (G1P). The G1P thus generated is used as the glycerophosphate backbone of phospholipids in the cellular membranes of Archaea. This Sulfolobus acidocaldarius (strain ATCC 33909 / DSM 639 / JCM 8929 / NBRC 15157 / NCIMB 11770) protein is Glycerol-1-phosphate dehydrogenase [NAD(P)+].